A 150-amino-acid chain; its full sequence is SsrA-binding protein (150 aa).

The protein belongs to the SmpB family.

The protein resides in the cytoplasm. Required for rescue of stalled ribosomes mediated by trans-translation. Binds to transfer-messenger RNA (tmRNA), required for stable association of tmRNA with ribosomes. tmRNA and SmpB together mimic tRNA shape, replacing the anticodon stem-loop with SmpB. tmRNA is encoded by the ssrA gene; the 2 termini fold to resemble tRNA(Ala) and it encodes a 'tag peptide', a short internal open reading frame. During trans-translation Ala-aminoacylated tmRNA acts like a tRNA, entering the A-site of stalled ribosomes, displacing the stalled mRNA. The ribosome then switches to translate the ORF on the tmRNA; the nascent peptide is terminated with the 'tag peptide' encoded by the tmRNA and targeted for degradation. The ribosome is freed to recommence translation, which seems to be the essential function of trans-translation. The sequence is that of SsrA-binding protein from Bacteroides thetaiotaomicron (strain ATCC 29148 / DSM 2079 / JCM 5827 / CCUG 10774 / NCTC 10582 / VPI-5482 / E50).